The primary structure comprises 641 residues: ATP-dependent DNA helicase PIF1 (641 aa).

The segment at Met-1–Ala-180 is PINT. Phosphoserine is present on residues Ser-27 and Ser-151. The hydrolyzes ATP in the presence of both magnesium and single-stranded DNA; weak activity in the presence of RNA or double-stranded DNA; No unwinding activity stretch occupies residues Pro-167–Leu-641. A disordered region spans residues Lys-173–Pro-192. Residue Gly-228–Ser-235 participates in ATP binding. Residues Gln-577–Phe-596 mediate DNA binding. Positions Leu-622–Leu-641 are disordered. Positions Ser-624 to Leu-641 are enriched in acidic residues.

The protein belongs to the helicase family. PIF1 subfamily. As to quaternary structure, monomer. Interacts with telomerase. Mg(2+) serves as cofactor. As to expression, weak ubiquitous expression.

It localises to the nucleus. It is found in the mitochondrion. It catalyses the reaction Couples ATP hydrolysis with the unwinding of duplex DNA at the replication fork by translocating in the 5'-3' direction. This creates two antiparallel DNA single strands (ssDNA). The leading ssDNA polymer is the template for DNA polymerase III holoenzyme which synthesizes a continuous strand.. The catalysed reaction is ATP + H2O = ADP + phosphate + H(+). Functionally, DNA-dependent ATPase and 5'-3' DNA helicase required for the maintenance of both mitochondrial and nuclear genome stability. Efficiently unwinds G-quadruplex (G4) DNA structures and forked RNA-DNA hybrids. Resolves G4 structures, preventing replication pausing and double-strand breaks (DSBs) at G4 motifs. Involved in the maintenance of telomeric DNA. Inhibits telomere elongation, de novo telomere formation and telomere addition to DSBs via catalytic inhibition of telomerase. Reduces the processivity of telomerase by displacing active telomerase from DNA ends. Releases telomerase by unwinding the short telomerase RNA/telomeric DNA hybrid that is the intermediate in the telomerase reaction. Possesses an intrinsic strand annealing activity. In Homo sapiens (Human), this protein is ATP-dependent DNA helicase PIF1.